Consider the following 152-residue polypeptide: Nucleoside diphosphate kinase B (152 aa).

Positions 1–66 (MANLERTFIA…DRPFFPGLVK (66 aa)) are interaction with AKAP13. Lysine 12, phenylalanine 60, arginine 88, threonine 94, arginine 105, and asparagine 115 together coordinate ATP. Residue histidine 118 is the Pros-phosphohistidine intermediate of the active site.

This sequence belongs to the NDK family. In terms of assembly, hexamer of two different chains: An and B (A6, A5B, A4B2, A3B3, A2B4, AB5, B6). Interacts with CAPN8. Interacts with AKAP13. Interacts with ITGB1BP1 (via C-terminal domain region). Interacts with BCL2L10. The cofactor is Mg(2+).

The protein localises to the cytoplasm. It is found in the cell projection. The protein resides in the lamellipodium. Its subcellular location is the ruffle. It localises to the nucleus. The catalysed reaction is a 2'-deoxyribonucleoside 5'-diphosphate + ATP = a 2'-deoxyribonucleoside 5'-triphosphate + ADP. It catalyses the reaction a ribonucleoside 5'-diphosphate + ATP = a ribonucleoside 5'-triphosphate + ADP. The enzyme catalyses ATP + protein L-histidine = ADP + protein N-phospho-L-histidine.. Functionally, major role in the synthesis of nucleoside triphosphates other than ATP. The ATP gamma phosphate is transferred to the NDP beta phosphate via a ping-pong mechanism, using a phosphorylated active-site intermediate. Negatively regulates Rho activity by interacting with AKAP13/LBC. Acts as a transcriptional activator of the MYC gene; binds DNA non-specifically. Binds to both single-stranded guanine- and cytosine-rich strands within the nuclease hypersensitive element (NHE) III(1) region of the MYC gene promoter. Does not bind to duplex NHE III(1). Has G-quadruplex (G4) DNA-binding activity, which is independent of its nucleotide-binding and kinase activity. Binds both folded and unfolded G4 with similar low nanomolar affinities. Stabilizes folded G4s regardless of whether they are prefolded or not. Exhibits histidine protein kinase activity. This is Nucleoside diphosphate kinase B (NME2) from Pongo abelii (Sumatran orangutan).